The following is a 336-amino-acid chain: Lipoyl synthase (336 aa).

[4Fe-4S] cluster-binding residues include cysteine 81, cysteine 86, cysteine 92, cysteine 107, cysteine 111, cysteine 114, and serine 323. One can recognise a Radical SAM core domain in the interval 93 to 312 (FGHGTATFMI…EDYGYELGFS (220 aa)).

The protein belongs to the radical SAM superfamily. Lipoyl synthase family. [4Fe-4S] cluster is required as a cofactor.

Its subcellular location is the cytoplasm. It catalyses the reaction [[Fe-S] cluster scaffold protein carrying a second [4Fe-4S](2+) cluster] + N(6)-octanoyl-L-lysyl-[protein] + 2 oxidized [2Fe-2S]-[ferredoxin] + 2 S-adenosyl-L-methionine + 4 H(+) = [[Fe-S] cluster scaffold protein] + N(6)-[(R)-dihydrolipoyl]-L-lysyl-[protein] + 4 Fe(3+) + 2 hydrogen sulfide + 2 5'-deoxyadenosine + 2 L-methionine + 2 reduced [2Fe-2S]-[ferredoxin]. Its pathway is protein modification; protein lipoylation via endogenous pathway; protein N(6)-(lipoyl)lysine from octanoyl-[acyl-carrier-protein]: step 2/2. Catalyzes the radical-mediated insertion of two sulfur atoms into the C-6 and C-8 positions of the octanoyl moiety bound to the lipoyl domains of lipoate-dependent enzymes, thereby converting the octanoylated domains into lipoylated derivatives. The polypeptide is Lipoyl synthase (Stenotrophomonas maltophilia (strain R551-3)).